The following is a 502-amino-acid chain: Glycogen synthase (502 aa).

Lysine 24 contributes to the ADP-alpha-D-glucose binding site.

It belongs to the glycosyltransferase 1 family. Bacterial/plant glycogen synthase subfamily.

It carries out the reaction [(1-&gt;4)-alpha-D-glucosyl](n) + ADP-alpha-D-glucose = [(1-&gt;4)-alpha-D-glucosyl](n+1) + ADP + H(+). It participates in glycan biosynthesis; glycogen biosynthesis. In terms of biological role, synthesizes alpha-1,4-glucan chains using ADP-glucose. The polypeptide is Glycogen synthase (Nitrosomonas eutropha (strain DSM 101675 / C91 / Nm57)).